We begin with the raw amino-acid sequence, 1026 residues long: RecBCD enzyme subunit RecB (1026 aa).

In terms of domain architecture, UvrD-like helicase ATP-binding spans 1–438; it reads MSSFDIFSPT…LILDTNYRST (438 aa). Residues 1–766 are DNA-binding and helicase activity, interacts with RecC; the sequence is MSSFDIFSPT…LANYANVTKH (766 aa). 21–28 contributes to the ATP binding site; it reads ASAGTGKT. The tract at residues 815-1026 is nuclease activity, interacts with RecD and RecA; the sequence is SRTIHSFSST…KGNGFLQPGR (212 aa). The Mg(2+) site is built by H854, D940, and D953. The For nuclease activity role is filled by D953.

It belongs to the helicase family. UvrD subfamily. In terms of assembly, heterotrimer of RecB, RecC and RecD. All subunits contribute to DNA-binding. Interacts with RecA. Mg(2+) serves as cofactor.

It carries out the reaction Exonucleolytic cleavage (in the presence of ATP) in either 5'- to 3'- or 3'- to 5'-direction to yield 5'-phosphooligonucleotides.. It catalyses the reaction Couples ATP hydrolysis with the unwinding of duplex DNA by translocating in the 3'-5' direction.. The enzyme catalyses ATP + H2O = ADP + phosphate + H(+). In terms of biological role, a helicase/nuclease that prepares dsDNA breaks (DSB) for recombinational DNA repair. Binds to DSBs and unwinds DNA via a highly rapid and processive ATP-dependent bidirectional helicase activity. Unwinds dsDNA until it encounters a Chi (crossover hotspot instigator) sequence from the 3' direction. Cuts ssDNA a few nucleotides 3' to the Chi site. The properties and activities of the enzyme are changed at Chi. The Chi-altered holoenzyme produces a long 3'-ssDNA overhang and facilitates RecA-binding to the ssDNA for homologous DNA recombination and repair. Holoenzyme degrades any linearized DNA that is unable to undergo homologous recombination. In the holoenzyme this subunit contributes ATPase, 3'-5' helicase, exonuclease activity and loads RecA onto ssDNA. This chain is RecBCD enzyme subunit RecB, found in Chlamydia trachomatis serovar D (strain ATCC VR-885 / DSM 19411 / UW-3/Cx).